A 552-amino-acid chain; its full sequence is Carotenoid cleavage dioxygenase 8 homolog A, chloroplastic (552 aa).

A chloroplast-targeting transit peptide spans 1–43 (MATSLTLIATPCTAPRSSSSFALAPRLPPRCSNATAARRRAVR). The disordered stretch occupies residues 32-73 (SNATAARRRAVRATTLQSDQEPAGSGDSGATTTKLSASTSVR). Positions 59–72 (SGATTTKLSASTSV) are enriched in polar residues. Residues His239, His289, His356, and His543 each contribute to the Fe cation site.

Belongs to the carotenoid oxygenase family. Fe(2+) is required as a cofactor. As to expression, highly expressed in panicles, inflorescences and parenchyma cells of the root stele, and at lower levels in shoot apex, leaf buds and xylem parenchyma cells of the stem.

The protein localises to the plastid. It is found in the chloroplast. Its function is as follows. May be involved in strigolactones biosynthesis. The polypeptide is Carotenoid cleavage dioxygenase 8 homolog A, chloroplastic (CCD8A) (Oryza sativa subsp. japonica (Rice)).